We begin with the raw amino-acid sequence, 1140 residues long: Rho GTPase-activating protein gacF (1140 aa).

Disordered stretches follow at residues M1–R145, E189–I236, I455–F504, E520–S644, E661–E700, E720–S759, A773–S927, and T952–N1095. Composition is skewed to low complexity over residues L10 to F26 and Q35 to S71. A coiled-coil region spans residues T28–Q55. Residues I72–T82 are compositionally biased toward polar residues. Composition is skewed to low complexity over residues S83–P136 and D193–S222. A Rho-GAP domain is found at E234–F409. 2 stretches are compositionally biased toward low complexity: residues N456 to K475 and P482 to S493. Polar residues predominate over residues I494–F504. Positions I517 to Q548 form a coiled coil. The segment covering E520 to D533 has biased composition (low complexity). Positions E534 to D549 are enriched in acidic residues. Low complexity predominate over residues E550–T566. The span at S572–K596 shows a compositional bias: polar residues. The segment covering Q597 to Q606 has biased composition (basic residues). Over residues Q607–S631 the composition is skewed to low complexity. Composition is skewed to polar residues over residues P632–G641 and N672–G684. The span at D724–S759 shows a compositional bias: low complexity. Polar residues predominate over residues A773–N796. A compositionally biased stretch (low complexity) spans S797–S822. Residues I823–P854 are compositionally biased toward polar residues. Low complexity-rich tracts occupy residues K891–P914, T952–T1058, and H1065–S1079.

It localises to the cytoplasm. In terms of biological role, rho GTPase-activating protein involved in the signal transduction pathway. The polypeptide is Rho GTPase-activating protein gacF (gacF) (Dictyostelium discoideum (Social amoeba)).